A 181-amino-acid chain; its full sequence is Small ribosomal subunit protein uS4 (181 aa).

Residues 104–166 (RRLQTIVYKK…VTSSFKSRPP (63 aa)) enclose the S4 RNA-binding domain.

The protein belongs to the universal ribosomal protein uS4 family. As to quaternary structure, part of the 30S ribosomal subunit. Contacts protein S5. The interaction surface between S4 and S5 is involved in control of translational fidelity.

One of the primary rRNA binding proteins, it binds directly to 16S rRNA where it nucleates assembly of the body of the 30S subunit. Functionally, with S5 and S12 plays an important role in translational accuracy. The sequence is that of Small ribosomal subunit protein uS4 from Saccharolobus islandicus (strain Y.N.15.51 / Yellowstone #2) (Sulfolobus islandicus).